We begin with the raw amino-acid sequence, 547 residues long: Chaperonin GroEL (547 aa).

Residues 30–33 (TLGP), Lys-51, 87–91 (DGTTT), Gly-415, 479–481 (NAA), and Asp-495 each bind ATP.

It belongs to the chaperonin (HSP60) family. In terms of assembly, forms a cylinder of 14 subunits composed of two heptameric rings stacked back-to-back. Interacts with the co-chaperonin GroES.

It localises to the cytoplasm. It catalyses the reaction ATP + H2O + a folded polypeptide = ADP + phosphate + an unfolded polypeptide.. Together with its co-chaperonin GroES, plays an essential role in assisting protein folding. The GroEL-GroES system forms a nano-cage that allows encapsulation of the non-native substrate proteins and provides a physical environment optimized to promote and accelerate protein folding. In Pseudomonas fluorescens (strain ATCC BAA-477 / NRRL B-23932 / Pf-5), this protein is Chaperonin GroEL.